A 768-amino-acid chain; its full sequence is Putative calcium up-regulated protein H (768 aa).

The disordered stretch occupies residues 1 to 22; the sequence is MINIEDISKSSNQSEEKQLKST. 2 Ricin B-type lectin domains span residues 25-145 and 116-248; these read KPKY…WTTF and QGNG…WGIN.

It belongs to the cup family.

The protein resides in the cytoplasm. Its subcellular location is the membrane. In terms of biological role, may play an important role in stabilizing and/or regulating the cell membrane during Ca(2+) stress or certain stages of development. The chain is Putative calcium up-regulated protein H (cupH) from Dictyostelium discoideum (Social amoeba).